The chain runs to 312 residues: DNA-directed RNA polymerase subunit alpha (312 aa).

The segment at 1 to 226 is alpha N-terminal domain (alpha-NTD); sequence MIEFEKPTIT…EHLGLFTDLT (226 aa). Residues 242-312 are alpha C-terminal domain (alpha-CTD); it reads SDDRMLDRTI…DLGLGLKKDK (71 aa).

Belongs to the RNA polymerase alpha chain family. As to quaternary structure, homodimer. The RNAP catalytic core consists of 2 alpha, 1 beta, 1 beta' and 1 omega subunit. When a sigma factor is associated with the core the holoenzyme is formed, which can initiate transcription.

It carries out the reaction RNA(n) + a ribonucleoside 5'-triphosphate = RNA(n+1) + diphosphate. Functionally, DNA-dependent RNA polymerase catalyzes the transcription of DNA into RNA using the four ribonucleoside triphosphates as substrates. In Streptococcus suis (strain 98HAH33), this protein is DNA-directed RNA polymerase subunit alpha.